Consider the following 269-residue polypeptide: Formamidopyrimidine-DNA glycosylase (269 aa).

Catalysis depends on Pro-2, which acts as the Schiff-base intermediate with DNA. The active-site Proton donor is Glu-3. The active-site Proton donor; for beta-elimination activity is the Lys-57. Residues His-90, Arg-109, and Lys-150 each coordinate DNA. The segment at 235-269 (FVYGRAGEPCRICGEQIESIKLGQRSTFFCRHCQY) adopts an FPG-type zinc-finger fold. Arg-259 (proton donor; for delta-elimination activity) is an active-site residue.

Belongs to the FPG family. As to quaternary structure, monomer. Zn(2+) serves as cofactor.

The enzyme catalyses Hydrolysis of DNA containing ring-opened 7-methylguanine residues, releasing 2,6-diamino-4-hydroxy-5-(N-methyl)formamidopyrimidine.. It carries out the reaction 2'-deoxyribonucleotide-(2'-deoxyribose 5'-phosphate)-2'-deoxyribonucleotide-DNA = a 3'-end 2'-deoxyribonucleotide-(2,3-dehydro-2,3-deoxyribose 5'-phosphate)-DNA + a 5'-end 5'-phospho-2'-deoxyribonucleoside-DNA + H(+). In terms of biological role, involved in base excision repair of DNA damaged by oxidation or by mutagenic agents. Acts as a DNA glycosylase that recognizes and removes damaged bases. Has a preference for oxidized purines, such as 7,8-dihydro-8-oxoguanine (8-oxoG). Has AP (apurinic/apyrimidinic) lyase activity and introduces nicks in the DNA strand. Cleaves the DNA backbone by beta-delta elimination to generate a single-strand break at the site of the removed base with both 3'- and 5'-phosphates. The sequence is that of Formamidopyrimidine-DNA glycosylase from Photorhabdus laumondii subsp. laumondii (strain DSM 15139 / CIP 105565 / TT01) (Photorhabdus luminescens subsp. laumondii).